Here is a 121-residue protein sequence, read N- to C-terminus: uncharacterized protein (121 aa).

This is an uncharacterized protein from Archaeoglobus fulgidus (strain ATCC 49558 / DSM 4304 / JCM 9628 / NBRC 100126 / VC-16).